The chain runs to 91 residues: Large ribosomal subunit protein bL31B (91 aa).

The protein belongs to the bacterial ribosomal protein bL31 family. Type B subfamily. In terms of assembly, part of the 50S ribosomal subunit.

This is Large ribosomal subunit protein bL31B from Neisseria gonorrhoeae (strain NCCP11945).